Here is a 450-residue protein sequence, read N- to C-terminus: UPF0210 protein CPE1497 (450 aa).

This sequence belongs to the UPF0210 family. Homodimer.

This Clostridium perfringens (strain 13 / Type A) protein is UPF0210 protein CPE1497.